The primary structure comprises 316 residues: Cytochrome c biogenesis protein CcsA (316 aa).

8 helical membrane-spanning segments follow: residues 9-29, 39-61, 70-90, 94-114, 143-163, 224-244, 257-271, and 289-309; these read IFVNISFVMFFFVTLLNLINL, FSKNSMTIAFFCTTGFLITRYLQ, LYESLMFLSWGFSLLYLILEV, IGLSHAVLAPGAMLIHAFATL, LISYITLLCGSLLAITLLSLF, TISLGFSLLTIGILSGAVWAN, ETWALVTWLVYAIYL, and SMGFFLVWICFLGVNLLGVGL.

This sequence belongs to the CcmF/CycK/Ccl1/NrfE/CcsA family. May interact with Ccs1.

The protein resides in the plastid. Its subcellular location is the chloroplast thylakoid membrane. Required during biogenesis of c-type cytochromes (cytochrome c6 and cytochrome f) at the step of heme attachment. This chain is Cytochrome c biogenesis protein CcsA, found in Adiantum capillus-veneris (Maidenhair fern).